We begin with the raw amino-acid sequence, 445 residues long: NADH-quinone oxidoreductase subunit F (445 aa).

An NAD(+)-binding site is contributed by 61–70; that stretch reads GRGGAGFSTG. Residue 174-221 participates in FMN binding; that stretch reads GAGRYICGEETALINSLEGRRANPRSKPPFPATSGAWGKPTCVNNVET. Residues Cys351, Cys354, Cys357, and Cys398 each coordinate [4Fe-4S] cluster.

Belongs to the complex I 51 kDa subunit family. In terms of assembly, composed of 13 different subunits. Subunits NuoCD, E, F, and G constitute the peripheral sector of the complex. FMN is required as a cofactor. It depends on [4Fe-4S] cluster as a cofactor.

It carries out the reaction a quinone + NADH + 5 H(+)(in) = a quinol + NAD(+) + 4 H(+)(out). NDH-1 shuttles electrons from NADH, via FMN and iron-sulfur (Fe-S) centers, to quinones in the respiratory chain. The immediate electron acceptor for the enzyme in this species is believed to be ubiquinone. Couples the redox reaction to proton translocation (for every two electrons transferred, four hydrogen ions are translocated across the cytoplasmic membrane), and thus conserves the redox energy in a proton gradient. The chain is NADH-quinone oxidoreductase subunit F (nuoF) from Escherichia coli (strain K12).